The chain runs to 248 residues: Pulmonary surfactant-associated protein A (248 aa).

The N-terminal stretch at 1-20 (MWLCPLALTLTLMAASGAAC) is a signal peptide. The Collagen-like domain occupies 31–100 (GIPGTPGSHG…PGERGPPGLP (70 aa)). Residues 33–100 (PGTPGSHGLP…PGERGPPGLP (68 aa)) are disordered. Over residues 42-51 (PGRDGRDGVK) the composition is skewed to basic and acidic residues. Residues 54–65 (PGPPGPMGPPGD) show a composition bias toward pro residues. The C-type lectin domain maps to 134 to 247 (IGGKVFSTNG…CLYNRLTICE (114 aa)). 2 disulfide bridges follow: C155-C246 and C224-C238. N207 carries an N-linked (GlcNAc...) asparagine glycan. Ca(2+)-binding residues include E215, A217, N234, and D235.

It belongs to the SFTPA family. As to quaternary structure, oligomeric complex of 6 set of homotrimers.

Its subcellular location is the secreted. The protein localises to the extracellular space. It localises to the extracellular matrix. It is found in the surface film. In terms of biological role, in presence of calcium ions, it binds to surfactant phospholipids and contributes to lower the surface tension at the air-liquid interface in the alveoli of the mammalian lung and is essential for normal respiration. Enhances the expression of MYO18A/SP-R210 on alveolar macrophages. This Macaca mulatta (Rhesus macaque) protein is Pulmonary surfactant-associated protein A (SFTPA1).